Consider the following 360-residue polypeptide: MSDSLSNITIERKHNHVEICLHEAVGFDRKSAGFDEIEFIHNALPEIRFSDIDLSTTFLGRKIGAPLMISSMTGGFEKASLLNRRFAEAAEHFGIPLGIGSMRQALENSTQKESFAIVRKYAPSVPVFANIGAPEVARGLSASDIGILLELIEADALIVHLNAAQELFQPEGNTDFRHVLDQLSHLCATVPVPVIVKEVGCGISGVCAQRVLDAGVKVIDVAGAGGISWQKVEEIRYVRQRERENRFSPEALDDLLNWGIPTARCIAEVSDLKKHTVHTDFEIIASGGIRSGLDIAKSLALGARIGASAGQLLNAAHEERLEETIETWLNDLRAVLFLTGTTSPDKLQKQHLILKHRPIL.

Substrate is bound at residue 12–13 (RK). FMN-binding positions include Ser-70, 71 to 73 (SMT), Ser-101, and Asn-130. Substrate is bound at residue 101 to 103 (SMR). Position 165 (Gln-165) interacts with substrate. Position 166 (Glu-166) interacts with Mg(2+). Residues Lys-197, 288-290 (GIR), and 309-310 (AG) each bind FMN.

Belongs to the IPP isomerase type 2 family. As to quaternary structure, homooctamer. Dimer of tetramers. It depends on FMN as a cofactor. NADPH is required as a cofactor. Mg(2+) serves as cofactor.

Its subcellular location is the cytoplasm. The enzyme catalyses isopentenyl diphosphate = dimethylallyl diphosphate. Its function is as follows. Involved in the biosynthesis of isoprenoids. Catalyzes the 1,3-allylic rearrangement of the homoallylic substrate isopentenyl (IPP) to its allylic isomer, dimethylallyl diphosphate (DMAPP). This chain is Isopentenyl-diphosphate delta-isomerase, found in Chlorobium limicola (strain DSM 245 / NBRC 103803 / 6330).